Reading from the N-terminus, the 118-residue chain is Large ribosomal subunit protein bL20 (118 aa).

This sequence belongs to the bacterial ribosomal protein bL20 family.

Functionally, binds directly to 23S ribosomal RNA and is necessary for the in vitro assembly process of the 50S ribosomal subunit. It is not involved in the protein synthesizing functions of that subunit. This chain is Large ribosomal subunit protein bL20, found in Yersinia enterocolitica serotype O:8 / biotype 1B (strain NCTC 13174 / 8081).